A 691-amino-acid polypeptide reads, in one-letter code: Elongation factor G (691 aa).

In terms of domain architecture, tr-type G spans 8–282 (ERVRNIGIAA…AVVDYLPAPV (275 aa)). GTP-binding positions include 17 to 24 (AHIDAGKT), 81 to 85 (DTPGH), and 135 to 138 (NKMD).

Belongs to the TRAFAC class translation factor GTPase superfamily. Classic translation factor GTPase family. EF-G/EF-2 subfamily.

It is found in the cytoplasm. In terms of biological role, catalyzes the GTP-dependent ribosomal translocation step during translation elongation. During this step, the ribosome changes from the pre-translocational (PRE) to the post-translocational (POST) state as the newly formed A-site-bound peptidyl-tRNA and P-site-bound deacylated tRNA move to the P and E sites, respectively. Catalyzes the coordinated movement of the two tRNA molecules, the mRNA and conformational changes in the ribosome. The sequence is that of Elongation factor G from Prochlorococcus marinus (strain MIT 9515).